A 719-amino-acid chain; its full sequence is MVQTYRSPVRIYKHPFEIVMAAYEMRFPTCPQIPIFVGSEVTYEYKSVDGAEWVIDRKCQLNVEAPYLVKKIAGVDYVYFSQKNSLDRRKRTLDIEATNISFSSRINVKENCTYYVHAENENWTCFEQSASLDVKNFFGLESAVEKLAVRQYGANLAKGKEILEFFIEELLKKTTHIERFRDADQEETTSATDSAIEMKELSDGDAVLVNDRPPMLAAETDEMRTARATASFDDADSKLEAEYIRRFLGQLSPLEESRLCEIKYSLQAHHKGKLPNDAHLLRFLRARDFDVAKAKDMVHASIIWRKQHNVDKILEEWTRPTVIKQYFPGCWHNSDKAGRPMYILRFGQLDTKGMLRSCGVENLVKLTLSICEDGLQRAAEATRKLGTPISSWSLVVDLDGLSMRHLWRPGVQCLLKIIEIVEANYPETMGQVLVVRAPRVFPVLWTLISPFIDEKTRKKFMVSGGSGGDLKEELRKHIEEKFIPDFLGGSCLTTNCGLGGHVPKSMYLPVEEQEGASSSEDPLHSTYTSTATWRGYPVEVVIPIETAGCVLTWDFDVLKNDCEFSLYFSTEKIEQPAVRDGAQSPTTILNPVEMVSAAIGGASHQHPDLQCAPELKIGTPQLRLEEKAVVFQEGDSMQGSHYCSRAGTYIMQWRVPETAAGHSSTFDFGSHKCRLIYYYEILNSENFRGSVASLESCRSSSFSSIAPPTPPTPGTPRNP.

Positions 2-175 constitute a PRELI/MSF1 domain; it reads VQTYRSPVRI…FIEELLKKTT (174 aa). In terms of domain architecture, CRAL-TRIO spans 319 to 495; the sequence is RPTVIKQYFP…FLGGSCLTTN (177 aa). The GOLD domain maps to 524-681; it reads HSTYTSTATW…KCRLIYYYEI (158 aa). The disordered stretch occupies residues 700 to 719; sequence SSFSSIAPPTPPTPGTPRNP. The segment covering 707–719 has biased composition (pro residues); that stretch reads PPTPPTPGTPRNP.

This chain is CRAL-TRIO domain-containing protein T23G5.2, found in Caenorhabditis elegans.